Consider the following 484-residue polypeptide: HSPB1-associated protein 1 (484 aa).

Residues 1 to 26 (MAARPGAITNADSASGGGEEEGKHVK) form a disordered region. The interval 88 to 208 (ETACNYVEAT…EDTPFLYPTR (121 aa)) is interaction with HSPB1. The JmjC domain occupies 124–288 (WAYADYKYFV…HQTRVEEAIT (165 aa)). The interval 396–429 (TPSSEEPSSERGGIFENDGEDFVSKNGKSFGKRQ) is disordered.

Interacts with CRYAB and HSPB1.

Its subcellular location is the cytoplasm. In terms of biological role, may play a role in cellular stress response. The protein is HSPB1-associated protein 1 (HSPBAP1) of Bos taurus (Bovine).